A 175-amino-acid chain; its full sequence is General stress protein 14 (175 aa).

The protein belongs to the NAD(P)H dehydrogenase (quinone) family.

In Bacillus subtilis (strain 168), this protein is General stress protein 14 (ywrO).